Here is a 340-residue protein sequence, read N- to C-terminus: Ketol-acid reductoisomerase (NADP(+)) (340 aa).

A KARI N-terminal Rossmann domain is found at Met1 to Thr182. Residues Tyr24–Gln27, Arg48, Ser51, Ser53, and Asp83–Gln86 contribute to the NADP(+) site. His108 is an active-site residue. Position 134 (Gly134) interacts with NADP(+). The KARI C-terminal knotted domain occupies Asn183–Ile329. Mg(2+) is bound by residues Asp191, Glu195, Glu227, and Glu231. Ser252 contributes to the substrate binding site.

It belongs to the ketol-acid reductoisomerase family. Requires Mg(2+) as cofactor.

It carries out the reaction (2R)-2,3-dihydroxy-3-methylbutanoate + NADP(+) = (2S)-2-acetolactate + NADPH + H(+). The enzyme catalyses (2R,3R)-2,3-dihydroxy-3-methylpentanoate + NADP(+) = (S)-2-ethyl-2-hydroxy-3-oxobutanoate + NADPH + H(+). The protein operates within amino-acid biosynthesis; L-isoleucine biosynthesis; L-isoleucine from 2-oxobutanoate: step 2/4. It functions in the pathway amino-acid biosynthesis; L-valine biosynthesis; L-valine from pyruvate: step 2/4. Its function is as follows. Involved in the biosynthesis of branched-chain amino acids (BCAA). Catalyzes an alkyl-migration followed by a ketol-acid reduction of (S)-2-acetolactate (S2AL) to yield (R)-2,3-dihydroxy-isovalerate. In the isomerase reaction, S2AL is rearranged via a Mg-dependent methyl migration to produce 3-hydroxy-3-methyl-2-ketobutyrate (HMKB). In the reductase reaction, this 2-ketoacid undergoes a metal-dependent reduction by NADPH to yield (R)-2,3-dihydroxy-isovalerate. This chain is Ketol-acid reductoisomerase (NADP(+)), found in Dinoroseobacter shibae (strain DSM 16493 / NCIMB 14021 / DFL 12).